The sequence spans 266 residues: GTP cyclohydrolase III (266 aa).

Belongs to the archaeal-type GTP cyclohydrolase family.

It carries out the reaction GTP + 3 H2O = 2-amino-5-formylamino-6-(5-phospho-D-ribosylamino)pyrimidin-4(3H)-one + 2 phosphate + 2 H(+). In terms of biological role, catalyzes the formation of 2-amino-5-formylamino-6-ribofuranosylamino-4(3H)-pyrimidinone ribonucleotide monophosphate and inorganic phosphate from GTP. Also has an independent pyrophosphate phosphohydrolase activity. This is GTP cyclohydrolase III from Methanococcus maripaludis (strain C7 / ATCC BAA-1331).